A 164-amino-acid chain; its full sequence is Transcriptional repressor NrdR (164 aa).

A zinc finger spans residues 3-34 (CPFCSAQDTKVIDSRLVADGVQIRRRRECLSC). In terms of domain architecture, ATP-cone spans 49–139 (PRLVKTDGTR…VYRSFQDISE (91 aa)).

The protein belongs to the NrdR family. It depends on Zn(2+) as a cofactor.

Negatively regulates transcription of bacterial ribonucleotide reductase nrd genes and operons by binding to NrdR-boxes. The protein is Transcriptional repressor NrdR of Alcanivorax borkumensis (strain ATCC 700651 / DSM 11573 / NCIMB 13689 / SK2).